The following is a 293-amino-acid chain: uncharacterized protein (293 aa).

A compositionally biased stretch (basic residues) spans 1 to 10 (MHMQLRKRKR). Positions 1–28 (MHMQLRKRKRVDYSGRNQTSDPPSTTTA) are disordered. Over residues 15-28 (GRNQTSDPPSTTTA) the composition is skewed to polar residues.

It is found in the nucleus. This is an uncharacterized protein from Saccharomyces cerevisiae (strain ATCC 204508 / S288c) (Baker's yeast).